Here is a 488-residue protein sequence, read N- to C-terminus: Probable G-protein coupled receptor Mth-like 12 (488 aa).

A signal peptide spans 1-17 (MFLWLKCFCTLIIVTIA). The Extracellular segment spans residues 18-215 (KNSSAKIPHC…NRRCYRNVMP (198 aa)). N-linked (GlcNAc...) asparagine glycans are attached at residues asparagine 19, asparagine 34, and asparagine 55. 5 cysteine pairs are disulfide-bonded: cysteine 27-cysteine 81, cysteine 83-cysteine 88, cysteine 92-cysteine 189, cysteine 93-cysteine 104, and cysteine 155-cysteine 209. A glycan (N-linked (GlcNAc...) asparagine) is linked at asparagine 141. A helical membrane pass occupies residues 216-236 (GIAQLSVISVVGFILTLAVYL). The Cytoplasmic portion of the chain corresponds to 237–247 (SVEKLRNLLGK). The helical transmembrane segment at 248–268 (CLICSLFSMFMEYFIWTMDYF) threads the bilayer. The Extracellular portion of the chain corresponds to 269 to 283 (RLLQSICSAAGYMKY). The helical transmembrane segment at 284–304 (FFSMSSYLWFSVVSFHLWELF) threads the bilayer. The Cytoplasmic portion of the chain corresponds to 305-315 (TSLNRHEPQYR). The helical transmembrane segment at 316–336 (FLIYNTFVWCTAAIPTVVIFS) threads the bilayer. Residues 337 to 373 (MNQMWENDPGKSEWLPLVGYFGCSVKDWNSSSWFYSH) lie on the Extracellular side of the membrane. N-linked (GlcNAc...) asparagine glycosylation is present at asparagine 365. The helical transmembrane segment at 374–394 (IPIVILNSFNVIMFVLTAIYI) threads the bilayer. Residues 395–416 (WKVKKGVKSFAQHDERNTTCLE) lie on the Cytoplasmic side of the membrane. Residues 417-437 (FNVQTYIQFVRLFLIMGASWL) form a helical membrane-spanning segment. Residues 438–454 (LDQLTRLAEDSHLLLDT) lie on the Extracellular side of the membrane. Residues 455–475 (IVLNLTVYLNAAFGILIFVLL) form a helical membrane-spanning segment. The Cytoplasmic portion of the chain corresponds to 476 to 488 (ILKGSTFKMIMER).

The protein belongs to the G-protein coupled receptor 2 family. Mth subfamily.

It is found in the cell membrane. This Drosophila melanogaster (Fruit fly) protein is Probable G-protein coupled receptor Mth-like 12 (mthl12).